Here is a 165-residue protein sequence, read N- to C-terminus: Disulfide bond formation protein B (165 aa).

Topologically, residues 1 to 11 are cytoplasmic; that stretch reads MICSKVPVRAW. The helical transmembrane segment at 12-28 threads the bilayer; the sequence is FATLGLGCLGLVAVGMA. Over 29–46 the chain is Periplasmic; that stretch reads LQTLLHLAPCPLCIFQRL. Residues Cys-38 and Cys-41 are joined by a disulfide bond. Residues 47-61 traverse the membrane as a helical segment; sequence LYIMIGFVGLLGFVL. At 62-66 the chain is on the cytoplasmic side; it reads PAGRL. A helical membrane pass occupies residues 67-84; sequence LWSTLAAGLGVLGFGVAA. At 85-142 the chain is on the periplasmic side; sequence YQTWMQAFPDLAPECGFTDPNAIERLVDWLGMEWPSMFLATGFCTSRDWELLGLSMAN. The cysteines at positions 99 and 128 are disulfide-linked. Residues 143–161 form a helical membrane-spanning segment; that stretch reads WSVLIFAGIVAYAVLLFVR. The Cytoplasmic portion of the chain corresponds to 162-165; it reads KDRA.

It belongs to the DsbB family.

It is found in the cell inner membrane. Required for disulfide bond formation in some periplasmic proteins. Acts by oxidizing the DsbA protein. The chain is Disulfide bond formation protein B from Dechloromonas aromatica (strain RCB).